Here is a 336-residue protein sequence, read N- to C-terminus: Fructose-1,6-bisphosphatase class 2 (336 aa).

D33, E57, D85, and E88 together coordinate Mn(2+). Substrate contacts are provided by residues 88–90, Y119, 164–166, 186–188, and G210; these read EGT, KPR, and DGD. E213 is a Mn(2+) binding site.

Belongs to the FBPase class 2 family. In terms of assembly, homodimer. Mn(2+) is required as a cofactor.

The protein localises to the cytoplasm. It catalyses the reaction beta-D-fructose 1,6-bisphosphate + H2O = beta-D-fructose 6-phosphate + phosphate. Its pathway is carbohydrate biosynthesis; gluconeogenesis. In terms of biological role, catalyzes the hydrolysis of fructose 1,6-bisphosphate to fructose 6-phosphate. The protein is Fructose-1,6-bisphosphatase class 2 (glpX) of Shigella flexneri.